A 715-amino-acid chain; its full sequence is Elongation factor G (715 aa).

The tr-type G domain maps to 8-290; it reads NRYRNIGICA…AVIDFLPAPT (283 aa). Residues 17–24, 88–92, and 142–145 each bind GTP; these read AHVDAGKT, DTPGH, and NKMD.

It belongs to the TRAFAC class translation factor GTPase superfamily. Classic translation factor GTPase family. EF-G/EF-2 subfamily.

The protein localises to the cytoplasm. Functionally, catalyzes the GTP-dependent ribosomal translocation step during translation elongation. During this step, the ribosome changes from the pre-translocational (PRE) to the post-translocational (POST) state as the newly formed A-site-bound peptidyl-tRNA and P-site-bound deacylated tRNA move to the P and E sites, respectively. Catalyzes the coordinated movement of the two tRNA molecules, the mRNA and conformational changes in the ribosome. The chain is Elongation factor G from Ectopseudomonas mendocina (strain ymp) (Pseudomonas mendocina).